The following is a 290-amino-acid chain: 4-hydroxybenzoate octaprenyltransferase (290 aa).

The next 6 helical transmembrane spans lie at 41–61 (WPLL…GCAM), 89–109 (WEAV…IQPL), 133–153 (FFAI…PMAF), 158–178 (DTVP…SVAY), 202–224 (FGRF…YVWI), and 269–289 (WLGG…GTAG).

It belongs to the UbiA prenyltransferase family. Mg(2+) serves as cofactor.

It is found in the cell inner membrane. It catalyses the reaction all-trans-octaprenyl diphosphate + 4-hydroxybenzoate = 4-hydroxy-3-(all-trans-octaprenyl)benzoate + diphosphate. It participates in cofactor biosynthesis; ubiquinone biosynthesis. Functionally, catalyzes the prenylation of para-hydroxybenzoate (PHB) with an all-trans polyprenyl group. Mediates the second step in the final reaction sequence of ubiquinone-8 (UQ-8) biosynthesis, which is the condensation of the polyisoprenoid side chain with PHB, generating the first membrane-bound Q intermediate 3-octaprenyl-4-hydroxybenzoate. The chain is 4-hydroxybenzoate octaprenyltransferase from Burkholderia ambifaria (strain ATCC BAA-244 / DSM 16087 / CCUG 44356 / LMG 19182 / AMMD) (Burkholderia cepacia (strain AMMD)).